The sequence spans 1849 residues: UPF0606 protein KIAA1549L (1849 aa).

Polar residues predominate over residues 1 to 10 (MDHTASQNAQ). Disordered regions lie at residues 1–70 (MDHT…LLQL), 142–166 (ATAN…PALS), 213–242 (PTEN…PATR), and 529–586 (RHSV…ERNA). 2 stretches are compositionally biased toward polar residues: residues 529 to 541 (RHSV…QLPN) and 552 to 586 (PGPT…ERNA). Residues 958-986 (KFAQTMEQRLQKAFQDAERKVLNTKSNLT) adopt a coiled-coil conformation. The chain crosses the membrane as a helical span at residues 1180-1200 (LWIIAAVLAPIAVVTVIIIII). 4 disordered regions span residues 1258–1338 (LPIR…EEEG), 1460–1546 (SKNR…SQPS), 1656–1679 (RSTS…AQLH), and 1769–1819 (SRYP…APLT). Composition is skewed to polar residues over residues 1290–1319 (PSEN…AQQK), 1463–1482 (RQQM…SPSP), and 1537–1546 (ETSTLSSQPS). Composition is skewed to low complexity over residues 1769–1786 (SRYP…YSQP) and 1795–1809 (QAPA…QSLA).

The protein belongs to the UPF0606 family.

It is found in the membrane. This Homo sapiens (Human) protein is UPF0606 protein KIAA1549L (KIAA1549L).